The following is a 75-amino-acid chain: MIKIYSTPTCPWCKKTKEYLKSKNIDFVDVNVADDMKEREEMRSLSKQSGVPVINIDGNIIVGFNKAEIDKLIEK.

The Glutaredoxin domain occupies 1–75; it reads MIKIYSTPTC…KAEIDKLIEK (75 aa). Cysteine 10 and cysteine 13 are disulfide-bonded.

The protein belongs to the glutaredoxin family.

This is an uncharacterized protein from Clostridium pasteurianum.